The following is a 534-amino-acid chain: Putative fimbrium tip subunit Fim1C (534 aa).

An N-terminal signal peptide occupies residues 1 to 21; it reads MKQYKLMQVALLAILLFGWAG. Residue cysteine 22 is the site of N-palmitoyl cysteine attachment. The S-diacylglycerol cysteine moiety is linked to residue cysteine 22. The propeptide occupies 22–54; that stretch reads CSQNEEEVPGNVRNGIVLNVTDTGIISNEPSTR.

Belongs to the bacteroidetes fimbrillin superfamily. Mfa-like family. In terms of assembly, may be part of the fimbrial tip.

It is found in the fimbrium. The protein localises to the cell outer membrane. In terms of biological role, probably a component of the fimbrium tip. Fimbriae are filamentous appendages on the cell surface that mediate cell adhesion and biofilm formation. The polypeptide is Putative fimbrium tip subunit Fim1C (Bacteroides ovatus (strain ATCC 8483 / DSM 1896 / JCM 5824 / BCRC 10623 / CCUG 4943 / NCTC 11153)).